Reading from the N-terminus, the 153-residue chain is MSLDLALDIQHATTCDWLPTDEQFALWATTAIGNSMDEAELTIRIVDSRESQMLNSTYRGKDKPTNVLSFPFEAPPEIELPLLGDLVICAAVVENEAREQQKTLEAHWAHMVVHGCLHLLGYDHIEDEEAEEMESLETQLIEGLGFTDPYKEQ.

Zn(2+) contacts are provided by His-114, His-118, and His-124.

This sequence belongs to the endoribonuclease YbeY family. It depends on Zn(2+) as a cofactor.

The protein resides in the cytoplasm. Functionally, single strand-specific metallo-endoribonuclease involved in late-stage 70S ribosome quality control and in maturation of the 3' terminus of the 16S rRNA. The chain is Endoribonuclease YbeY from Shewanella baltica (strain OS223).